Reading from the N-terminus, the 343-residue chain is tRNA N6-adenosine threonylcarbamoyltransferase (343 aa).

Fe cation contacts are provided by histidine 114 and histidine 118. Residues 137 to 141 (LVSGG), aspartate 171, glycine 184, aspartate 188, and asparagine 278 each bind substrate. Aspartate 306 is a binding site for Fe cation.

It belongs to the KAE1 / TsaD family. It depends on Fe(2+) as a cofactor.

Its subcellular location is the cytoplasm. The enzyme catalyses L-threonylcarbamoyladenylate + adenosine(37) in tRNA = N(6)-L-threonylcarbamoyladenosine(37) in tRNA + AMP + H(+). In terms of biological role, required for the formation of a threonylcarbamoyl group on adenosine at position 37 (t(6)A37) in tRNAs that read codons beginning with adenine. Is involved in the transfer of the threonylcarbamoyl moiety of threonylcarbamoyl-AMP (TC-AMP) to the N6 group of A37, together with TsaE and TsaB. TsaD likely plays a direct catalytic role in this reaction. The chain is tRNA N6-adenosine threonylcarbamoyltransferase from Acidothermus cellulolyticus (strain ATCC 43068 / DSM 8971 / 11B).